We begin with the raw amino-acid sequence, 329 residues long: Phosphate acetyltransferase (329 aa).

This sequence belongs to the phosphate acetyltransferase and butyryltransferase family.

It localises to the cytoplasm. The enzyme catalyses acetyl-CoA + phosphate = acetyl phosphate + CoA. Its pathway is metabolic intermediate biosynthesis; acetyl-CoA biosynthesis; acetyl-CoA from acetate: step 2/2. The polypeptide is Phosphate acetyltransferase (pta) (Corynebacterium glutamicum (strain ATCC 13032 / DSM 20300 / JCM 1318 / BCRC 11384 / CCUG 27702 / LMG 3730 / NBRC 12168 / NCIMB 10025 / NRRL B-2784 / 534)).